The chain runs to 303 residues: Probable 5-dehydro-4-deoxyglucarate dehydratase (303 aa).

Belongs to the DapA family.

The catalysed reaction is 5-dehydro-4-deoxy-D-glucarate + H(+) = 2,5-dioxopentanoate + CO2 + H2O. Its pathway is carbohydrate acid metabolism; D-glucarate degradation; 2,5-dioxopentanoate from D-glucarate: step 2/2. The polypeptide is Probable 5-dehydro-4-deoxyglucarate dehydratase (Variovorax paradoxus (strain S110)).